The following is a 294-amino-acid chain: UDP-3-O-acyl-N-acetylglucosamine deacetylase (294 aa).

Zn(2+) is bound by residues His-75, His-232, and Asp-236. The Proton donor role is filled by His-259.

The protein belongs to the LpxC family. Zn(2+) is required as a cofactor.

The enzyme catalyses a UDP-3-O-[(3R)-3-hydroxyacyl]-N-acetyl-alpha-D-glucosamine + H2O = a UDP-3-O-[(3R)-3-hydroxyacyl]-alpha-D-glucosamine + acetate. It participates in glycolipid biosynthesis; lipid IV(A) biosynthesis; lipid IV(A) from (3R)-3-hydroxytetradecanoyl-[acyl-carrier-protein] and UDP-N-acetyl-alpha-D-glucosamine: step 2/6. In terms of biological role, catalyzes the hydrolysis of UDP-3-O-myristoyl-N-acetylglucosamine to form UDP-3-O-myristoylglucosamine and acetate, the committed step in lipid A biosynthesis. This chain is UDP-3-O-acyl-N-acetylglucosamine deacetylase, found in Campylobacter fetus subsp. fetus (strain 82-40).